A 396-amino-acid chain; its full sequence is MAKLNAYFGEYGGQYVPQILVPALEQLEQAFIDAQEDPEFRSEFMTLLQEYAGRPTALTLTRNLTKGTKTKLYLKREDLLHGGAHKTNQVLGQALLAKRMGKNEIIAETGAGQHGVATALACALLGLKCRVYMGAKDVERQSPNVFRMKLMGAEVIPVHSGSATLKDACNEALRDWSATYEDAHYLLGTAAGPHPFPTIVRDFQRMIGEETKNQILAREGRLPDAVIACVGGGSNAIGMFADFIEEESVRLIGVEPAGKGIDTDQHGAPLKHGKTGIFFGMKAPLMQDPNGQVEESYSVSAGLDFPSVGPQHAHLNAIGRAEYDNVTDDEALEAFQEIARHEGIIPALESSHAVAHALRMARENPEKEQLLVVNLSGRGDKDIFTVHAILEEKGAI.

K86 is subject to N6-(pyridoxal phosphate)lysine.

Belongs to the TrpB family. As to quaternary structure, tetramer of two alpha and two beta chains. Requires pyridoxal 5'-phosphate as cofactor.

The catalysed reaction is (1S,2R)-1-C-(indol-3-yl)glycerol 3-phosphate + L-serine = D-glyceraldehyde 3-phosphate + L-tryptophan + H2O. The protein operates within amino-acid biosynthesis; L-tryptophan biosynthesis; L-tryptophan from chorismate: step 5/5. In terms of biological role, the beta subunit is responsible for the synthesis of L-tryptophan from indole and L-serine. This is Tryptophan synthase beta chain from Vibrio campbellii (strain ATCC BAA-1116).